A 64-amino-acid polypeptide reads, in one-letter code: Temporin-ALe (64 aa).

Positions 1 to 22 (MFTLKKSLLLLFFLGTINLSLC) are cleaved as a signal peptide. A propeptide spanning residues 23-47 (EQERNAEEERRDEPDERNAEVEKRF) is cleaved from the precursor. Leucine 62 carries the leucine amide modification.

As to expression, expressed by the skin glands.

The protein resides in the secreted. In terms of biological role, antimicrobial peptide with activity against Gram-positive and Gram-negative bacteria and against fungi. Has been tested against S.aureus (MIC=1.25 ug/mL), B.pumilus (MIC=5.0 ug/mL), B.cereus (MIC=15.0 ug/mL), E.coli (MIC=1.25 ug/mL), B.dysenteriae (MIC=5.0 ug/mL), A.cacoaceticus (MIC=15.0 ug/mL), P.aeruginosa (MIC=5.0 ug/mL) and C.albicans (MIC=1.25 ug/mL). Also shows a weak hemolytic activity. The chain is Temporin-ALe from Amolops loloensis (Lolokou Sucker Frog).